The sequence spans 276 residues: 3,4-dihydroxyphenylacetate 2,3-dioxygenase (276 aa).

Fe cation is required as a cofactor.

It catalyses the reaction 3,4-dihydroxyphenylacetate + O2 = 2-hydroxy-5-carboxymethylmuconate semialdehyde + H(+). The protein operates within aromatic compound metabolism; 4-hydroxyphenylacetate degradation; pyruvate and succinate semialdehyde from 4-hydroxyphenylacetate: step 2/7. Functionally, transforms homoprotocatechuic acid (HPC) into 5-carboxymethyl-2-hydroxy-muconic semialdehyde (CHMS). In Escherichia coli, this protein is 3,4-dihydroxyphenylacetate 2,3-dioxygenase (hpcB).